A 280-amino-acid polypeptide reads, in one-letter code: Aspartate/glutamate leucyltransferase (280 aa).

This sequence belongs to the R-transferase family. Bpt subfamily.

It localises to the cytoplasm. The enzyme catalyses N-terminal L-glutamyl-[protein] + L-leucyl-tRNA(Leu) = N-terminal L-leucyl-L-glutamyl-[protein] + tRNA(Leu) + H(+). The catalysed reaction is N-terminal L-aspartyl-[protein] + L-leucyl-tRNA(Leu) = N-terminal L-leucyl-L-aspartyl-[protein] + tRNA(Leu) + H(+). Functions in the N-end rule pathway of protein degradation where it conjugates Leu from its aminoacyl-tRNA to the N-termini of proteins containing an N-terminal aspartate or glutamate. In Cereibacter sphaeroides (strain KD131 / KCTC 12085) (Rhodobacter sphaeroides), this protein is Aspartate/glutamate leucyltransferase.